We begin with the raw amino-acid sequence, 947 residues long: Protocadherin alpha-4 (947 aa).

The first 29 residues, 1–29 (MEFSWGSGQESRRLLLLLLLLSAWEAGNG), serve as a signal peptide directing secretion. 6 consecutive Cadherin domains span residues 30 to 133 (QLHY…PPVF), 134 to 242 (PATQ…APAF), 243 to 350 (DRTI…VPDL), 351 to 455 (EFKS…APAF), 456 to 565 (AQPE…APAL), and 588 to 678 (DHVV…APKA). At 30–697 (QLHYSVSEEA…GPDAALVDVN (668 aa)) the chain is on the extracellular side. C96 and C102 are disulfide-bonded. N-linked (GlcNAc...) asparagine glycosylation is found at N139, N257, and N265. N548 carries an N-linked (GlcNAc...) asparagine glycan. The helical transmembrane segment at 698–718 (VYLIIAICAVSSLLVLTLLLY) threads the bilayer. At 719-947 (TALRCSAPPT…GNSTTDNSDQ (229 aa)) the chain is on the cytoplasmic side. PXXP repeat units lie at residues 734–737 (PGKP), 774–777 (PSLP), 796–799 (PRQP), 829–832 (PGGP), 870–873 (PGNP), and 888–891 (PGSP). Positions 734–891 (PGKPTLVCSS…PDKFIIPGSP (158 aa)) are 6 X 4 AA repeats of P-X-X-P. The segment at 738–947 (TLVCSSAVGS…GNSTTDNSDQ (210 aa)) is required for interaction with FYN. 2 disordered regions span residues 754–805 (RRPR…DWRY) and 828–853 (GPGG…EVSP). Residues 892–947 (AIISIRQEPANSQIDKSDFITFGKKEETKKKKKKKKGNKTQEKKEKGNSTTDNSDQ) are disordered. Over residues 906-920 (DKSDFITFGKKEETK) the composition is skewed to basic and acidic residues.

As to quaternary structure, forms homodimers in trans (molecules expressed by two different cells). Forms promiscuous heterodimers in cis (at the plasma membrane of the same cell) with other protocadherins. Interacts with FYN.

The protein resides in the cell membrane. Functionally, calcium-dependent cell-adhesion protein involved in cells self-recognition and non-self discrimination. Thereby, it is involved in the establishment and maintenance of specific neuronal connections in the brain. The polypeptide is Protocadherin alpha-4 (Pan troglodytes (Chimpanzee)).